The following is a 257-amino-acid chain: MDRIIEKLESGWWIVSHEQKLWLPYGELPHGLAANFDLVGQRALRIGEWQGEPVWLVLQHRRHDMGSVRQVIDQDAGLFQLAGRGVQLAEFYRSHKFCGYCGHPMHPSKTEWAMLCSHCRERYYPQIAPCIIVAIRREDSILLAQHVRHRNGVHTVLAGFVEVGETLEQAVAREVMEESGIKVKNLRYVTSQPWPFPQSLMTAFMAEYDSGEIAIDPKELLEANWYHYDDLPLLPPPGTVARRLIEDTVAMCRAEYD.

Position 69 (R69) interacts with substrate. Residues C98 and C101 each coordinate Zn(2+). Residue E111 coordinates substrate. Residues C116 and C119 each coordinate Zn(2+). Y124 contributes to the substrate binding site. The Nudix hydrolase domain occupies 125-248 (PQIAPCIIVA…TVARRLIEDT (124 aa)). 3 residues coordinate a divalent metal cation: A158, E174, and E178. Residues 159 to 180 (GFVEVGETLEQAVAREVMEESG) carry the Nudix box motif. 192-199 (QPWPFPQS) provides a ligand contact to substrate. E219 contributes to the a divalent metal cation binding site. A substrate-binding site is contributed by A241.

It belongs to the Nudix hydrolase family. NudC subfamily. In terms of assembly, homodimer. It depends on Mg(2+) as a cofactor. The cofactor is Mn(2+). Zn(2+) serves as cofactor.

The catalysed reaction is a 5'-end NAD(+)-phospho-ribonucleoside in mRNA + H2O = a 5'-end phospho-adenosine-phospho-ribonucleoside in mRNA + beta-nicotinamide D-ribonucleotide + 2 H(+). It catalyses the reaction NAD(+) + H2O = beta-nicotinamide D-ribonucleotide + AMP + 2 H(+). The enzyme catalyses NADH + H2O = reduced beta-nicotinamide D-ribonucleotide + AMP + 2 H(+). MRNA decapping enzyme that specifically removes the nicotinamide adenine dinucleotide (NAD) cap from a subset of mRNAs by hydrolyzing the diphosphate linkage to produce nicotinamide mononucleotide (NMN) and 5' monophosphate mRNA. The NAD-cap is present at the 5'-end of some mRNAs and stabilizes RNA against 5'-processing. Has preference for mRNAs with a 5'-end purine. Catalyzes the hydrolysis of a broad range of dinucleotide pyrophosphates. The polypeptide is NAD-capped RNA hydrolase NudC (Salmonella choleraesuis (strain SC-B67)).